Consider the following 119-residue polypeptide: Large ribosomal subunit protein uL14m (119 aa).

It belongs to the universal ribosomal protein uL14 family.

Its subcellular location is the mitochondrion. The chain is Large ribosomal subunit protein uL14m from Tetrahymena pyriformis.